The sequence spans 326 residues: Tetraacyldisaccharide 4'-kinase (326 aa).

55–62 (TVGGNGKT) is a binding site for ATP.

This sequence belongs to the LpxK family.

It catalyses the reaction a lipid A disaccharide + ATP = a lipid IVA + ADP + H(+). It functions in the pathway glycolipid biosynthesis; lipid IV(A) biosynthesis; lipid IV(A) from (3R)-3-hydroxytetradecanoyl-[acyl-carrier-protein] and UDP-N-acetyl-alpha-D-glucosamine: step 6/6. Its function is as follows. Transfers the gamma-phosphate of ATP to the 4'-position of a tetraacyldisaccharide 1-phosphate intermediate (termed DS-1-P) to form tetraacyldisaccharide 1,4'-bis-phosphate (lipid IVA). The sequence is that of Tetraacyldisaccharide 4'-kinase from Tolumonas auensis (strain DSM 9187 / NBRC 110442 / TA 4).